We begin with the raw amino-acid sequence, 339 residues long: tRNA N6-adenosine threonylcarbamoyltransferase (339 aa).

Fe cation contacts are provided by His111 and His115. Substrate-binding positions include 139–143, Asp172, Gly185, Asp189, and Asn280; that span reads LVSGG. Asp308 is a binding site for Fe cation.

This sequence belongs to the KAE1 / TsaD family. It depends on Fe(2+) as a cofactor.

The protein resides in the cytoplasm. It catalyses the reaction L-threonylcarbamoyladenylate + adenosine(37) in tRNA = N(6)-L-threonylcarbamoyladenosine(37) in tRNA + AMP + H(+). Its function is as follows. Required for the formation of a threonylcarbamoyl group on adenosine at position 37 (t(6)A37) in tRNAs that read codons beginning with adenine. Is involved in the transfer of the threonylcarbamoyl moiety of threonylcarbamoyl-AMP (TC-AMP) to the N6 group of A37, together with TsaE and TsaB. TsaD likely plays a direct catalytic role in this reaction. This chain is tRNA N6-adenosine threonylcarbamoyltransferase, found in Bacteroides fragilis (strain ATCC 25285 / DSM 2151 / CCUG 4856 / JCM 11019 / LMG 10263 / NCTC 9343 / Onslow / VPI 2553 / EN-2).